A 290-amino-acid polypeptide reads, in one-letter code: 4-hydroxy-tetrahydrodipicolinate synthase (290 aa).

Threonine 44 is a pyruvate binding site. The active-site Proton donor/acceptor is tyrosine 132. The Schiff-base intermediate with substrate role is filled by lysine 160. Isoleucine 202 is a pyruvate binding site.

It belongs to the DapA family. As to quaternary structure, homotetramer; dimer of dimers.

The protein localises to the cytoplasm. The enzyme catalyses L-aspartate 4-semialdehyde + pyruvate = (2S,4S)-4-hydroxy-2,3,4,5-tetrahydrodipicolinate + H2O + H(+). The protein operates within amino-acid biosynthesis; L-lysine biosynthesis via DAP pathway; (S)-tetrahydrodipicolinate from L-aspartate: step 3/4. Functionally, catalyzes the condensation of (S)-aspartate-beta-semialdehyde [(S)-ASA] and pyruvate to 4-hydroxy-tetrahydrodipicolinate (HTPA). The protein is 4-hydroxy-tetrahydrodipicolinate synthase of Geotalea uraniireducens (strain Rf4) (Geobacter uraniireducens).